Consider the following 413-residue polypeptide: GTPase HflX (413 aa).

Residues 200 to 386 (VRVALVGYTN…KVYETVREIH (187 aa)) form the Hflx-type G domain. Residues 206–213 (GYTNVGKS), 231–235 (FATLD), 252–255 (DTVG), 318–321 (NKID), and 364–366 (SAT) contribute to the GTP site. Ser213 and Thr233 together coordinate Mg(2+).

It belongs to the TRAFAC class OBG-HflX-like GTPase superfamily. HflX GTPase family. Monomer. Associates with the 50S ribosomal subunit. Requires Mg(2+) as cofactor.

It localises to the cytoplasm. GTPase that associates with the 50S ribosomal subunit and may have a role during protein synthesis or ribosome biogenesis. This chain is GTPase HflX, found in Flavobacterium psychrophilum (strain ATCC 49511 / DSM 21280 / CIP 103535 / JIP02/86).